Reading from the N-terminus, the 555-residue chain is Glutamine--tRNA ligase (555 aa).

A 'HIGH' region motif is present at residues 35–45 (PEPNGYLHIGH). Residues 36–38 (EPN) and 42–48 (HIGHAKS) contribute to the ATP site. Asp-68 and Tyr-213 together coordinate L-glutamine. ATP is bound by residues Thr-232, 262–263 (RL), and 270–272 (MSK). The short motif at 269 to 273 (VMSKR) is the 'KMSKS' region element.

The protein belongs to the class-I aminoacyl-tRNA synthetase family. In terms of assembly, monomer.

It is found in the cytoplasm. It catalyses the reaction tRNA(Gln) + L-glutamine + ATP = L-glutaminyl-tRNA(Gln) + AMP + diphosphate. The protein is Glutamine--tRNA ligase of Photobacterium profundum (strain SS9).